Reading from the N-terminus, the 477-residue chain is Bifunctional enzyme PyrF/PyrE (477 aa).

Residues Met-1 to Ser-273 form an OMP decarboxylase region. Lys-96 (proton donor) is an active-site residue. The interval Val-274–Glu-477 is orotate phosphoribosyltransferase. 5-phospho-alpha-D-ribose 1-diphosphate is bound by residues Arg-374, Lys-375, Lys-378, His-380, and Asp-400–Ser-408.

In the N-terminal section; belongs to the OMP decarboxylase family. Type 2 subfamily. The protein in the C-terminal section; belongs to the purine/pyrimidine phosphoribosyltransferase family. Mg(2+) serves as cofactor.

It catalyses the reaction orotidine 5'-phosphate + H(+) = UMP + CO2. It carries out the reaction orotidine 5'-phosphate + diphosphate = orotate + 5-phospho-alpha-D-ribose 1-diphosphate. It functions in the pathway pyrimidine metabolism; UMP biosynthesis via de novo pathway; UMP from orotate: step 1/2. Its pathway is pyrimidine metabolism; UMP biosynthesis via de novo pathway; UMP from orotate: step 2/2. Catalyzes the transfer of a ribosyl phosphate group from 5-phosphoribose 1-diphosphate to orotate, leading to the formation of orotidine monophosphate (OMP). In terms of biological role, catalyzes the decarboxylation of orotidine monophosphate (OMP) to uridine monophosphate (UMP). This is Bifunctional enzyme PyrF/PyrE (pyrFE) from Nostoc sp. (strain PCC 7120 / SAG 25.82 / UTEX 2576).